The sequence spans 356 residues: Cobalt-precorrin-5B C(1)-methyltransferase (356 aa).

Belongs to the CbiD family.

It catalyses the reaction Co-precorrin-5B + S-adenosyl-L-methionine = Co-precorrin-6A + S-adenosyl-L-homocysteine. The protein operates within cofactor biosynthesis; adenosylcobalamin biosynthesis; cob(II)yrinate a,c-diamide from sirohydrochlorin (anaerobic route): step 6/10. Its function is as follows. Catalyzes the methylation of C-1 in cobalt-precorrin-5B to form cobalt-precorrin-6A. The chain is Cobalt-precorrin-5B C(1)-methyltransferase from Geobacter sp. (strain M21).